The chain runs to 606 residues: DNA primase (606 aa).

The CHC2-type zinc-finger motif lies at 40 to 64 (CPFHQEKTPSFYVVPEKRFYFCHGC). The Toprim domain maps to 256–349 (KAAVLVEGYF…DPDTFARREG (94 aa)). Mg(2+) contacts are provided by glutamate 262, aspartate 307, and aspartate 309. Residues 429–451 (VPLPKPAGGDAPPSSPNRPAPPL) form a disordered region. A compositionally biased stretch (pro residues) spans 441 to 451 (PSSPNRPAPPL).

The protein belongs to the DnaG primase family. As to quaternary structure, monomer. Interacts with DnaB. The cofactor is Zn(2+). Mg(2+) is required as a cofactor.

It catalyses the reaction ssDNA + n NTP = ssDNA/pppN(pN)n-1 hybrid + (n-1) diphosphate.. RNA polymerase that catalyzes the synthesis of short RNA molecules used as primers for DNA polymerase during DNA replication. The polypeptide is DNA primase (Myxococcus xanthus).